Consider the following 313-residue polypeptide: uncharacterized protein (313 aa).

The first 24 residues, 1–24 (MKRRRRWRGWLLFLALCFCLLCEA), serve as a signal peptide directing secretion. Residues N28, N43, N57, N77, N101, N102, N109, N149, N168, N215, N222, N251, N254, and N267 are each glycosylated (N-linked (GlcNAc...) asparagine; by host). Positions 47-73 (ATTGTTTTSPNVTSTTSNTVTTPTTVS) are disordered. Low complexity predominate over residues 90-114 (STVSGTRNTRNNNTTTIGTNATSPS). The tract at residues 90–117 (STVSGTRNTRNNNTTTIGTNATSPSSSV) is disordered.

This sequence belongs to the HHV-5 US34A protein family.

This is an uncharacterized protein from Homo sapiens (Human).